A 415-amino-acid chain; its full sequence is Phosphopentomutase (415 aa).

D10, D313, H318, D354, H355, and H366 together coordinate Mn(2+).

This sequence belongs to the phosphopentomutase family. Mn(2+) serves as cofactor.

Its subcellular location is the cytoplasm. It catalyses the reaction 2-deoxy-alpha-D-ribose 1-phosphate = 2-deoxy-D-ribose 5-phosphate. The catalysed reaction is alpha-D-ribose 1-phosphate = D-ribose 5-phosphate. The protein operates within carbohydrate degradation; 2-deoxy-D-ribose 1-phosphate degradation; D-glyceraldehyde 3-phosphate and acetaldehyde from 2-deoxy-alpha-D-ribose 1-phosphate: step 1/2. Its function is as follows. Isomerase that catalyzes the conversion of deoxy-ribose 1-phosphate (dRib-1-P) and ribose 1-phosphate (Rib-1-P) to deoxy-ribose 5-phosphate (dRib-5-P) and ribose 5-phosphate (Rib-5-P), respectively. This Psychromonas ingrahamii (strain DSM 17664 / CCUG 51855 / 37) protein is Phosphopentomutase.